A 287-amino-acid chain; its full sequence is Cyclopropane mycolic acid synthase MmaA2 (287 aa).

S-adenosyl-L-methionine contacts are provided by residues 33–34, 72–74, 94–99, 123–124, and Ile-136; these read YS, GCG, TLSKNQ, and WE. Cys-269 is a catalytic residue.

The protein belongs to the CFA/CMAS family.

It carries out the reaction a 1-acyl-2-(9Z)-enoyl-sn-glycero-3-phospholipid + S-adenosyl-L-methionine = a 1-acyl-2-(9-cyclopronane)-acyl-sn-glycero-3-phospholipid + S-adenosyl-L-homocysteine + H(+). It participates in lipid metabolism; mycolic acid biosynthesis. Catalyzes the conversion of a double bond to a cis cyclopropane ring at the distal position of an alpha mycolic acid via the transfer of a methylene group from S-adenosyl-L-methionine. MmaA2 also catalyzes the biosynthesis of the cis-cyclopropanated methoxymycolates. Cyclopropanated mycolic acids are key factors participating in cell envelope permeability, host immunomodulation and persistence. This is Cyclopropane mycolic acid synthase MmaA2 (cmaC) from Mycobacterium bovis (strain ATCC BAA-935 / AF2122/97).